Reading from the N-terminus, the 512-residue chain is Mesoderm induction early response protein 1 (512 aa).

Residues 1-16 (MAEPSVESSSPGGSAT) are compositionally biased toward low complexity. 2 disordered regions span residues 1 to 63 (MAEP…REGD) and 75 to 173 (YGST…EDYI). A Phosphoserine modification is found at serine 10. A compositionally biased stretch (basic and acidic residues) spans 17 to 36 (SDDHEFDPSADMLVHDFDDE). Acidic residues-rich tracts occupy residues 37-46 (RTLEEEEMME) and 83-105 (EEDEEEEEEEEEGEDDEDADNDD). A compositionally biased stretch (polar residues) spans 129 to 144 (QSSNDDPSQSVASQDA). Position 141 is a phosphoserine (serine 141). Tyrosine 155 carries the phosphotyrosine modification. Phosphoserine is present on residues serine 160 and serine 166. A compositionally biased stretch (acidic residues) spans 160-173 (SEVEEESEEDEDYI). One can recognise an ELM2 domain in the interval 180-278 (KEIMVGSMFQ…EALRRLRFNV (99 aa)). An interaction with HDAC1 region spans residues 180–284 (KEIMVGSMFQ…RFNVKAAREE (105 aa)). Residue lysine 239 forms a Glycyl lysine isopeptide (Lys-Gly) (interchain with G-Cter in SUMO2) linkage. Residues 283–335 (EELSVWTEEECRNFEQGLKAYGKDFHLIQANKVRTRSVGECVAFYYMWKKSER) form the SANT domain. The interval 366–512 (ESESAASSRA…KFEELENTDD (147 aa)) is disordered. Serine 367, serine 369, and serine 377 each carry phosphoserine. Over residues 396–409 (TVSTANQNGVSSNG) the composition is skewed to polar residues. A compositionally biased stretch (basic and acidic residues) spans 414–423 (LNKEEVKVEG). Residue lysine 420 forms a Glycyl lysine isopeptide (Lys-Gly) (interchain with G-Cter in SUMO2) linkage. The residue at position 448 (threonine 448) is a Phosphothreonine. Over residues 462–475 (ARNENDFDEKSERP) the composition is skewed to basic and acidic residues. Residues 482-494 (NSNGKESPGSSEF) show a composition bias toward polar residues. Serine 483, serine 488, and serine 491 each carry phosphoserine.

As to quaternary structure, interacts with HDAC1. Part of a complex containing at least CDYL, MIER1, MIER2, HDAC1 and HDAC2. As to expression, ubiquitously expressed, but at very low levels. However, consistent level of expression are observed in heart, testis, thyroid, ovary and adrenal gland. Transcripts are up-regulated in breast carcinoma cell lines and tumor.

It localises to the nucleus. The protein resides in the cytoplasm. Transcriptional repressor regulating the expression of a number of genes including SP1 target genes. Probably functions through recruitment of HDAC1 a histone deacetylase involved in chromatin silencing. In Homo sapiens (Human), this protein is Mesoderm induction early response protein 1 (MIER1).